An 89-amino-acid polypeptide reads, in one-letter code: MKTLLLSLVVVIIVCLDLGYTMQCKTCSFYTCPNSETCPDGKNICVKRSWTAVRGDGPKREIRRECAATCPPSKLGLTVFCCTTDNCYH.

A signal peptide spans 1–21 (MKTLLLSLVVVIIVCLDLGYT). 5 cysteine pairs are disulfide-bonded: Cys24–Cys45, Cys27–Cys32, Cys38–Cys66, Cys70–Cys81, and Cys82–Cys87. Positions 54-56 (RGD) match the Cell attachment site motif.

It belongs to the three-finger toxin family. Ancestral subfamily. Orphan group V sub-subfamily. Expressed by the venom gland.

The protein resides in the secreted. Its function is as follows. Exhibits M2 muscarinic acetylcholine receptor (CHRM2)-blocking activity, but has a weak binding activity toward nicotinic AChR. Moreover, it inhibits collagen-induced platelet aggregation. The protein is Long neurotoxin homolog NTL2 of Bungarus multicinctus (Many-banded krait).